A 92-amino-acid chain; its full sequence is YcgL domain-containing protein Sama_1929 (92 aa).

A YcgL domain is found at methionine 1–arginine 85.

The chain is YcgL domain-containing protein Sama_1929 from Shewanella amazonensis (strain ATCC BAA-1098 / SB2B).